A 120-amino-acid polypeptide reads, in one-letter code: Large ribosomal subunit protein bL19 (120 aa).

The protein belongs to the bacterial ribosomal protein bL19 family.

In terms of biological role, this protein is located at the 30S-50S ribosomal subunit interface and may play a role in the structure and function of the aminoacyl-tRNA binding site. The polypeptide is Large ribosomal subunit protein bL19 (Chlorobium luteolum (strain DSM 273 / BCRC 81028 / 2530) (Pelodictyon luteolum)).